Consider the following 122-residue polypeptide: Replication factor A protein 3 (122 aa).

This sequence belongs to the replication factor A protein 3 family. In terms of assembly, component of the heterotrimeric canonical replication protein A complex (RPA). Post-translationally, the N-terminus is blocked.

It is found in the nucleus. In terms of biological role, as part of the replication protein A (RPA/RP-A), a single-stranded DNA-binding heterotrimeric complex, may play an essential role in DNA replication, recombination and repair. Binds and stabilizes single-stranded DNA intermediates, preventing complementary DNA reannealing and recruiting different proteins involved in DNA metabolism. Stimulates the activity of a cognate strand exchange protein (SEP1). The protein is Replication factor A protein 3 (RFA3) of Saccharomyces cerevisiae (strain ATCC 204508 / S288c) (Baker's yeast).